We begin with the raw amino-acid sequence, 145 residues long: D-aminoacyl-tRNA deacylase (145 aa).

A Gly-cisPro motif, important for rejection of L-amino acids motif is present at residues 137-138 (GP).

The protein belongs to the DTD family. In terms of assembly, homodimer.

It is found in the cytoplasm. The catalysed reaction is glycyl-tRNA(Ala) + H2O = tRNA(Ala) + glycine + H(+). It carries out the reaction a D-aminoacyl-tRNA + H2O = a tRNA + a D-alpha-amino acid + H(+). Its function is as follows. An aminoacyl-tRNA editing enzyme that deacylates mischarged D-aminoacyl-tRNAs. Also deacylates mischarged glycyl-tRNA(Ala), protecting cells against glycine mischarging by AlaRS. Acts via tRNA-based rather than protein-based catalysis; rejects L-amino acids rather than detecting D-amino acids in the active site. By recycling D-aminoacyl-tRNA to D-amino acids and free tRNA molecules, this enzyme counteracts the toxicity associated with the formation of D-aminoacyl-tRNA entities in vivo and helps enforce protein L-homochirality. In Shewanella sp. (strain ANA-3), this protein is D-aminoacyl-tRNA deacylase.